Consider the following 283-residue polypeptide: Polyamine aminopropyltransferase (283 aa).

Residues 5 to 240 form the PABS domain; that stretch reads NTWFTEIHQD…GWWTATMACK (236 aa). Position 33 (Gln-33) interacts with S-methyl-5'-thioadenosine. 2 residues coordinate spermidine: His-64 and Asp-88. S-methyl-5'-thioadenosine-binding positions include Asp-108 and 139-140; that span reads DG. The Proton acceptor role is filled by Asp-158. Residue 158-161 coordinates spermidine; sequence DSTD. Pro-165 lines the S-methyl-5'-thioadenosine pocket.

Belongs to the spermidine/spermine synthase family. As to quaternary structure, homodimer or homotetramer.

It localises to the cytoplasm. The catalysed reaction is S-adenosyl 3-(methylsulfanyl)propylamine + putrescine = S-methyl-5'-thioadenosine + spermidine + H(+). Its pathway is amine and polyamine biosynthesis; spermidine biosynthesis; spermidine from putrescine: step 1/1. Its function is as follows. Catalyzes the irreversible transfer of a propylamine group from the amino donor S-adenosylmethioninamine (decarboxy-AdoMet) to putrescine (1,4-diaminobutane) to yield spermidine. This Thioalkalivibrio sulfidiphilus (strain HL-EbGR7) protein is Polyamine aminopropyltransferase.